Consider the following 87-residue polypeptide: Toxin Cll5b (87 aa).

An N-terminal signal peptide occupies residues 1–19 (MNSLLMITACLAEIGTVWA). An LCN-type CS-alpha/beta domain is found at 20 to 85 (KEGYLVNKST…TYPLPNKSCS (66 aa)). Disulfide bonds link cysteine 31–cysteine 84, cysteine 35–cysteine 60, cysteine 44–cysteine 65, and cysteine 48–cysteine 67. A propeptide spans 86 to 87 (KK) (removed by a carboxypeptidase).

The protein belongs to the long (4 C-C) scorpion toxin superfamily. Sodium channel inhibitor family. Beta subfamily. In terms of tissue distribution, expressed by the venom gland.

It is found in the secreted. Its function is as follows. Beta toxins bind voltage-independently at site-4 of sodium channels (Nav) and shift the voltage of activation toward more negative potentials thereby affecting sodium channel activation and promoting spontaneous and repetitive firing. The sequence is that of Toxin Cll5b from Centruroides limpidus (Mexican scorpion).